The chain runs to 347 residues: Phenylalanine--tRNA ligase alpha subunit (347 aa).

E261 is a Mg(2+) binding site.

Belongs to the class-II aminoacyl-tRNA synthetase family. Phe-tRNA synthetase alpha subunit type 1 subfamily. In terms of assembly, tetramer of two alpha and two beta subunits. Mg(2+) is required as a cofactor.

The protein localises to the cytoplasm. The enzyme catalyses tRNA(Phe) + L-phenylalanine + ATP = L-phenylalanyl-tRNA(Phe) + AMP + diphosphate + H(+). This Streptococcus mutans serotype c (strain ATCC 700610 / UA159) protein is Phenylalanine--tRNA ligase alpha subunit.